A 77-amino-acid polypeptide reads, in one-letter code: Acyl carrier protein (77 aa).

The Carrier domain maps to 2 to 77 (SDVADRVKKI…DAVKFISEAS (76 aa)). Position 37 is an O-(pantetheine 4'-phosphoryl)serine (Ser-37).

This sequence belongs to the acyl carrier protein (ACP) family. Post-translationally, 4'-phosphopantetheine is transferred from CoA to a specific serine of apo-ACP by AcpS. This modification is essential for activity because fatty acids are bound in thioester linkage to the sulfhydryl of the prosthetic group.

The protein resides in the cytoplasm. It functions in the pathway lipid metabolism; fatty acid biosynthesis. Functionally, carrier of the growing fatty acid chain in fatty acid biosynthesis. The chain is Acyl carrier protein from Ruegeria sp. (strain TM1040) (Silicibacter sp.).